Reading from the N-terminus, the 490-residue chain is ATP synthase subunit beta, plastid (490 aa).

170-177 (GGAGVGKT) provides a ligand contact to ATP.

This sequence belongs to the ATPase alpha/beta chains family. In terms of assembly, F-type ATPases have 2 components, CF(1) - the catalytic core - and CF(0) - the membrane proton channel. CF(1) has five subunits: alpha(3), beta(3), gamma(1), delta(1), epsilon(1). CF(0) has four main subunits: a(1), b(1), b'(1) and c(9-12).

It localises to the plastid membrane. It carries out the reaction ATP + H2O + 4 H(+)(in) = ADP + phosphate + 5 H(+)(out). Functionally, produces ATP from ADP in the presence of a proton gradient across the membrane. The catalytic sites are hosted primarily by the beta subunits. This is ATP synthase subunit beta, plastid from Cuscuta exaltata (Tall dodder).